Consider the following 689-residue polypeptide: Collagen alpha-2(IX) chain (689 aa).

The N-terminal stretch at 1–23 is a signal peptide; the sequence is MAAATASPRSLLVLLQVVVLALA. Positions 26–518 are disordered; sequence RGPPGERGPP…QPGRQGVEGR (493 aa). The interval 27-163 is triple-helical region 4 (COL4); sequence GPPGERGPPG…PGKPGRPGTI (137 aa). The segment covering 31-43 has biased composition (pro residues); that stretch reads ERGPPGPPGPPGV. Residues 44–56 are compositionally biased toward low complexity; sequence PGSDGIDGDNGPP. Pro residues-rich tracts occupy residues 106 to 127 and 144 to 157; these read LPGP…PGPV and PDGP…PGKP. Position 160 is a 4-hydroxyproline (Pro-160). The tract at residues 164-180 is nonhelical region 4 (NC4); it reads QGLEGSADFLCPTNCPP. The O-linked (Xyl...) (glycosaminoglycan) serine glycan is linked to Ser-169. Positions 181–519 are triple-helical region 3 (COL3); it reads GMKGPPGLQG…PGRQGVEGRD (339 aa). Residue Lys-183 is modified to 5-hydroxylysine. The O-linked (Gal...) hydroxylysine glycan is linked to Lys-183. Positions 343-352 are enriched in gly residues; that stretch reads GTKGGPGDQG. Low complexity-rich tracts occupy residues 353-366 and 393-413; these read EPGP…SGPP and RGPV…EQGP. The nonhelical region 3 (NC3) stretch occupies residues 520 to 549; that stretch reads ATDQHIVDVALKMLQEQLAEVAVSAKREAL. Positions 550 to 632 are triple-helical region 2 (COL2); the sequence is GAVGMMGPPG…PGLPGRPGQA (83 aa). The tract at residues 554–663 is disordered; the sequence is MMGPPGPPGP…LPGPVGLPGF (110 aa). The segment covering 557 to 566 has biased composition (pro residues); sequence PPGPPGPPGY. A compositionally biased stretch (basic and acidic residues) spans 599–611; the sequence is KRGEKGDPGEVGR. The interval 633-634 is nonhelical region 2 (NC2); sequence IN. The interval 635–664 is triple-helical region 1 (COL1); the sequence is GKDGDRGSPGAPGEAGRPGLPGPVGLPGFC. The nonhelical region 1 (NC1) stretch occupies residues 665–689; that stretch reads EPAACLGASAYASARLTEPGSIKGP.

It belongs to the fibril-associated collagens with interrupted helices (FACIT) family. Heterotrimer of an alpha 1(IX), an alpha 2(IX) and an alpha 3(IX) chain. The chains are linked to each other by interchain disulfide bonds. Trimers are also cross-linked via hydroxylysines. Post-translationally, covalently linked to the telopeptides of type II collagen by lysine-derived cross-links. In terms of processing, prolines at the third position of the tripeptide repeating unit (G-X-Y) are hydroxylated in some or all of the chains.

It localises to the secreted. The protein localises to the extracellular space. It is found in the extracellular matrix. In terms of biological role, structural component of hyaline cartilage and vitreous of the eye. The chain is Collagen alpha-2(IX) chain from Homo sapiens (Human).